A 479-amino-acid polypeptide reads, in one-letter code: Sulfate adenylyltransferase subunit 1 (479 aa).

Positions 25 to 239 (KSLLRFLTCG…EVLETVDIQR (215 aa)) constitute a tr-type G domain. A G1 region spans residues 34-41 (GSVDDGKS). Residue 34-41 (GSVDDGKS) participates in GTP binding. A G2 region spans residues 92–96 (GITID). Residues 113 to 116 (DTPG) form a G3 region. GTP is bound by residues 113–117 (DTPGH) and 168–171 (NKMD). A G4 region spans residues 168–171 (NKMD). The G5 stretch occupies residues 206 to 208 (SAL).

This sequence belongs to the TRAFAC class translation factor GTPase superfamily. Classic translation factor GTPase family. CysN/NodQ subfamily. In terms of assembly, heterodimer composed of CysD, the smaller subunit, and CysN.

The enzyme catalyses sulfate + ATP + H(+) = adenosine 5'-phosphosulfate + diphosphate. It participates in sulfur metabolism; hydrogen sulfide biosynthesis; sulfite from sulfate: step 1/3. With CysD forms the ATP sulfurylase (ATPS) that catalyzes the adenylation of sulfate producing adenosine 5'-phosphosulfate (APS) and diphosphate, the first enzymatic step in sulfur assimilation pathway. APS synthesis involves the formation of a high-energy phosphoric-sulfuric acid anhydride bond driven by GTP hydrolysis by CysN coupled to ATP hydrolysis by CysD. This chain is Sulfate adenylyltransferase subunit 1, found in Salmonella gallinarum (strain 287/91 / NCTC 13346).